The chain runs to 247 residues: Probable transcriptional regulatory protein YPK_2146 (247 aa).

Belongs to the TACO1 family.

It is found in the cytoplasm. The chain is Probable transcriptional regulatory protein YPK_2146 from Yersinia pseudotuberculosis serotype O:3 (strain YPIII).